A 285-amino-acid chain; its full sequence is Tumor necrosis factor ligand superfamily member 13B (285 aa).

The Cytoplasmic segment spans residues 1-46; it reads MDDSTEREQSRLTSCLKKREEMKLKECVSILPRKESPSVRSSKDGK. The helical; Signal-anchor for type II membrane protein transmembrane segment at 47–67 threads the bilayer; it reads LLAATLLLALLSCCLTVVSFY. The Extracellular portion of the chain corresponds to 68 to 285; that stretch reads QVAALQGDLA…VTFFGALKLL (218 aa). Residues 114-138 are disordered; it reads IFEPPAPGEGNSSQNSRNKRAVQGP. The N-linked (GlcNAc...) asparagine glycan is linked to Asn124. The 140-residue stretch at 145-284 folds into the THD domain; it reads DCLQLIADSE…DVTFFGALKL (140 aa). Cys232 and Cys245 form a disulfide bridge. Residue Asn242 is glycosylated (N-linked (GlcNAc...) (high mannose) asparagine).

It belongs to the tumor necrosis factor family. Homotrimer. Isoform 2 heteromultimerizes with isoform 1, probably limiting the amount of functional isoform 1 on the cell surface. Isoform 3 is unlikely form trimers or bind to BAFF receptors. In terms of processing, the soluble form derives from the membrane form by proteolytic processing. Isoform 2 is not efficiently shed from the membrane unlike isoform 1. Post-translationally, N-glycosylated. Abundantly expressed in peripheral blood Leukocytes and is specifically expressed in monocytes and macrophages. Also found in the spleen, lymph node, bone marrow, T-cells and dendritic cells. A lower expression seen in placenta, heart, lung, fetal liver, thymus, and pancreas. Isoform 2 is expressed in many myeloid cell lines.

It is found in the cell membrane. The protein localises to the secreted. In terms of biological role, cytokine that binds to TNFRSF13B/TACI and TNFRSF17/BCMA. TNFSF13/APRIL binds to the same 2 receptors. Together, they form a 2 ligands -2 receptors pathway involved in the stimulation of B- and T-cell function and the regulation of humoral immunity. A third B-cell specific BAFF-receptor (BAFFR/BR3) promotes the survival of mature B-cells and the B-cell response. Isoform 2 seems to inhibit isoform 1 secretion and bioactivity. Functionally, acts as a transcription factor for its own parent gene, in association with NF-kappa-B p50 subunit, at least in autoimmune and proliferative B-cell diseases. The presence of Delta4BAFF is essential for soluble BAFF release by IFNG/IFN-gamma-stimulated monocytes and for B-cell survival. It can directly or indirectly regulate the differential expression of a large number of genes involved in the innate immune response and the regulation of apoptosis. In Homo sapiens (Human), this protein is Tumor necrosis factor ligand superfamily member 13B (TNFSF13B).